We begin with the raw amino-acid sequence, 427 residues long: MQNSRSTKLFQQALQSIPGGVNSPVRAFRSVGSDPLFIKKAAGPRIYDEDGNAFIDYVGSWGPMILGHCHPQVVSAIKAAVDNGASFGAPTELEITLAEMVIDAVPSIEMVRMVSSGTEATMSAIRLARGYTGRDNILKFSGCYHGHSDSLLVKAGSGAATFGVPDSPGVPADLAKHTLTATYNDLDSVRALVAANKGSIACIIVEPVAGNMGTVPPKEGFLEGLRSICSEEGIVLIFDEVMSGFRVAYGGVQELYGVTPDMTTLGKIIGGGLPVGAFGGKKEIMSLLSPAGGVYQAGTLSGNPLAMTAGIETLKLLKQPGFYQKLEEKSAFVAEGIAKAAKDAGFPIYSTRVGSMFCAFFSKDPVYDWDSAAKCDTKAFAAYFKAMLNEGIYLAPSQFETAFVGISHSTEDLEQTIAAAAKCFKAL.

K267 carries the N6-(pyridoxal phosphate)lysine modification.

Belongs to the class-III pyridoxal-phosphate-dependent aminotransferase family. HemL subfamily. Homodimer. Pyridoxal 5'-phosphate is required as a cofactor.

The protein resides in the cytoplasm. It catalyses the reaction (S)-4-amino-5-oxopentanoate = 5-aminolevulinate. The protein operates within porphyrin-containing compound metabolism; protoporphyrin-IX biosynthesis; 5-aminolevulinate from L-glutamyl-tRNA(Glu): step 2/2. The sequence is that of Glutamate-1-semialdehyde 2,1-aminomutase from Citrifermentans bemidjiense (strain ATCC BAA-1014 / DSM 16622 / JCM 12645 / Bem) (Geobacter bemidjiensis).